Consider the following 331-residue polypeptide: Probable allantoicase (331 aa).

This sequence belongs to the allantoicase family.

It catalyses the reaction allantoate + H2O = (S)-ureidoglycolate + urea. It participates in nitrogen metabolism; (S)-allantoin degradation; (S)-ureidoglycolate from allantoate (aminidohydrolase route): step 1/1. The chain is Probable allantoicase from Pseudomonas syringae pv. tomato (strain ATCC BAA-871 / DC3000).